The following is a 635-amino-acid chain: Threonine--tRNA ligase (635 aa).

The TGS domain maps to 1–61 (MINISLSDGS…ENNCKLRILT (61 aa)). The interval 242–533 (DHRKLGRELD…LIEEYAGCFP (292 aa)) is catalytic. 3 residues coordinate Zn(2+): Cys-333, His-384, and His-510.

Belongs to the class-II aminoacyl-tRNA synthetase family. In terms of assembly, homodimer. Zn(2+) serves as cofactor.

It localises to the cytoplasm. It carries out the reaction tRNA(Thr) + L-threonine + ATP = L-threonyl-tRNA(Thr) + AMP + diphosphate + H(+). Functionally, catalyzes the attachment of threonine to tRNA(Thr) in a two-step reaction: L-threonine is first activated by ATP to form Thr-AMP and then transferred to the acceptor end of tRNA(Thr). Also edits incorrectly charged L-seryl-tRNA(Thr). The polypeptide is Threonine--tRNA ligase (Rickettsia canadensis (strain McKiel)).